A 288-amino-acid polypeptide reads, in one-letter code: MDGRISGSTQLLGLIGDPVAHSLSPAMHNAALAAMGENYCYVPFPVAPKHLAAAVAGLAAIGVRGFNVTIPHKQAILPLLDQIESRAAAVGAVNTVYPLPEGGWAGTNTDIDGFVQPLLGLEKGIPTLILGSGGAARAAIQGCLELGLGPVRVAGRSPNSLLALQQTWPQVETVNWAELNCYLSQTRLLVNTTPVGMHKPGSPAGQGLSPLSREQLGLLSPGAIVYDLIYVPDPTPLLRMAAELGHTPISGLEMLVHQGAKALSLWLGGKPVPVEVMRQAAQHQLAQV.

Shikimate is bound by residues 22-24 (SLS) and threonine 69. The active-site Proton acceptor is lysine 73. 2 residues coordinate shikimate: asparagine 94 and aspartate 110. Residues 131-135 (GSGGA) and leucine 228 each bind NADP(+). Tyrosine 230 lines the shikimate pocket. An NADP(+)-binding site is contributed by glycine 251.

This sequence belongs to the shikimate dehydrogenase family. Homodimer.

The enzyme catalyses shikimate + NADP(+) = 3-dehydroshikimate + NADPH + H(+). It functions in the pathway metabolic intermediate biosynthesis; chorismate biosynthesis; chorismate from D-erythrose 4-phosphate and phosphoenolpyruvate: step 4/7. Functionally, involved in the biosynthesis of the chorismate, which leads to the biosynthesis of aromatic amino acids. Catalyzes the reversible NADPH linked reduction of 3-dehydroshikimate (DHSA) to yield shikimate (SA). This chain is Shikimate dehydrogenase (NADP(+)), found in Synechococcus sp. (strain JA-2-3B'a(2-13)) (Cyanobacteria bacterium Yellowstone B-Prime).